A 122-amino-acid polypeptide reads, in one-letter code: Large ribosomal subunit protein bL20 (122 aa).

It belongs to the bacterial ribosomal protein bL20 family.

Its function is as follows. Binds directly to 23S ribosomal RNA and is necessary for the in vitro assembly process of the 50S ribosomal subunit. It is not involved in the protein synthesizing functions of that subunit. The polypeptide is Large ribosomal subunit protein bL20 (rplT) (Treponema pallidum (strain Nichols)).